Here is a 547-residue protein sequence, read N- to C-terminus: Inositol 1,4,5-trisphosphate receptor-interacting protein-like 1 (547 aa).

An N-terminal signal peptide occupies residues methionine 1–histidine 16. The Extracellular segment spans residues histidine 17–glycine 96. Residues aspartate 28–asparagine 66 are a coiled coil. A helical transmembrane segment spans residues proline 97–phenylalanine 117. The Cytoplasmic segment spans residues glutamate 118–leucine 547.

Belongs to the ITPRIP family.

It localises to the cell membrane. Its function is as follows. Functions as a ligand of CD3E, inhibiting TCR-CD3 complex signaling to regulate T cell activation. Induces stable CD3E-NCK1 binding, thereby preventing the CD3E-ZAP70 interaction and subsequently inhibiting the activation of the downstream ERK-NFkB signaling cascade and calcium influx. This chain is Inositol 1,4,5-trisphosphate receptor-interacting protein-like 1 (Itpripl1), found in Rattus norvegicus (Rat).